Here is a 286-residue protein sequence, read N- to C-terminus: Elongation factor Ts (286 aa).

Residues 79 to 82 (TDFV) are involved in Mg(2+) ion dislocation from EF-Tu.

The protein belongs to the EF-Ts family.

The protein resides in the cytoplasm. Its function is as follows. Associates with the EF-Tu.GDP complex and induces the exchange of GDP to GTP. It remains bound to the aminoacyl-tRNA.EF-Tu.GTP complex up to the GTP hydrolysis stage on the ribosome. The chain is Elongation factor Ts from Wolbachia sp. subsp. Drosophila simulans (strain wRi).